Reading from the N-terminus, the 63-residue chain is Beta-glucosidase A-3 (63 aa).

Residue D12 is part of the active site. N-linked (GlcNAc...) asparagine glycans are attached at residues N48 and N56.

Belongs to the glycosyl hydrolase 3 family.

The enzyme catalyses Hydrolysis of terminal, non-reducing beta-D-glucosyl residues with release of beta-D-glucose.. It functions in the pathway glycan metabolism; cellulose degradation. This chain is Beta-glucosidase A-3, found in Aspergillus wentii.